The sequence spans 155 residues: UPF0305 protein MTH_811 (155 aa).

Belongs to the UPF0305 family.

The polypeptide is UPF0305 protein MTH_811 (Methanothermobacter thermautotrophicus (strain ATCC 29096 / DSM 1053 / JCM 10044 / NBRC 100330 / Delta H) (Methanobacterium thermoautotrophicum)).